The sequence spans 157 residues: AM-toxin biosynthesis protein 15 (157 aa).

The segment at 17–43 is disordered; sequence RARHWDSKQGSSNSDVASGGSEVAGNS.

It participates in mycotoxin biosynthesis. Its function is as follows. Part of the gene clusters that mediate the biosynthesis of AM-toxins, host-selective toxins (HSTs) causing Alternaria blotch on apple, a worldwide distributed disease. AM-toxins are cyclic depsipeptides containing the 3 residues 2-hydroxy-isovaleric acid (2-HIV), dehydroalanine, L-alanine which are common for all 3 AM-toxins I to III. The fourth precursor is L-alpha-amino-methoxyphenyl-valeric acid (L-Amv) for AM-toxin I, L-alpha-amino-phenyl-valeric acid (L-Apv) for AM-toxin II, and L-alpha-amino-hydroxyphenyl-valeric acid (L-Ahv) for AM-toxin III. AM-toxins have two target sites for affecting susceptible apple cells; they cause invagination of the plasma membrane and electrolyte loss and chloroplast disorganization. The non-ribosomal peptide synthetase AMT1 contains 4 catalytic modules and is responsible for activation of each residue in AM-toxin. The aldo-keto reductase AMT2 catalyzes the conversion of 2-keto-isovaleric acid (2-KIV) to 2-hydroxy-isovaleric acid (2-HIV), one of the precursor residues incorporated by AMT1 during AM-toxin biosynthesis, by reduction of its ketone to an alcohol. The cytochrome P450 monooxygenase AMT3 and the thioesterase AMT4 are also important for AM-toxin production, but their exact function within the AM-toxin biosynthesis are not known yet. Up to 21 proteins (including AMT1 to AMT4) are predicted to be involved in AM-toxin biosynthesis since their expression ishighly up-regulated in AM-toxin-producing cultures. The chain is AM-toxin biosynthesis protein 15 from Alternaria alternata (Alternaria rot fungus).